A 258-amino-acid polypeptide reads, in one-letter code: Immediate-early protein IE-0 (258 aa).

The RING-type zinc-finger motif lies at 191–237 (CNICEDSSAEEQFLKPNVCCGYRVCNACYAKLWEFCTGAYPVCPICK).

This Lymantria dispar multicapsid nuclear polyhedrosis virus (LdMNPV) protein is Immediate-early protein IE-0 (IE-0).